The sequence spans 183 residues: Ribosome-binding factor A (183 aa).

A disordered region spans residues 132 to 183; it reads PAGEADPYRDNGSVAQSPAPGGLGIRTSDGPEAVEAPLTCGGDTGDDDRPKE.

This sequence belongs to the RbfA family. As to quaternary structure, monomer. Binds 30S ribosomal subunits, but not 50S ribosomal subunits or 70S ribosomes.

It is found in the cytoplasm. Its function is as follows. One of several proteins that assist in the late maturation steps of the functional core of the 30S ribosomal subunit. Associates with free 30S ribosomal subunits (but not with 30S subunits that are part of 70S ribosomes or polysomes). Required for efficient processing of 16S rRNA. May interact with the 5'-terminal helix region of 16S rRNA. This is Ribosome-binding factor A from Mycobacterium tuberculosis (strain ATCC 25177 / H37Ra).